The chain runs to 59 residues: UPF0434 protein HDEF_0234 (59 aa).

It belongs to the UPF0434 family.

This Hamiltonella defensa subsp. Acyrthosiphon pisum (strain 5AT) protein is UPF0434 protein HDEF_0234.